A 422-amino-acid chain; its full sequence is MALVLHAGKTNKNAFKTLIVAEYTGVKVELAPDFEMGVTNKTPEYLKLNPIGKVPLLETPDGPIFESNAIARYVARLKADNPLIGSSLIDYAHIEQWIDFGSLEIDANIISWFRPRFGYAVYLPPAEEAAISALKRALGALNTHLASNTYLVGHFVTLADIIVTCNLFFGFTKLMIKSFTSEFPHVERYFWTLVNQPKFKKVLGDVKQTESVPPVPSAKKPSQPKETKSKAKEEPKKEAKKEPAKPKAEAAEEVEEAPKPKPKNPLDLLPPSNMVLDDWKRLYSNTKTNFREVAIKGFWDMYDPEGYSLWFCEYKYNDENTVSFVTLNKVGGFLQRMDLARKYAFGKMLVIGSEPPFKVKGLWLFRGQEIPPFVMEECYDMELYNWTKVDLSDENQKERVNQVIEDQEPFEGEALLDAKCFK.

In terms of domain architecture, GST N-terminal spans 1-82; it reads MALVLHAGKT…YVARLKADNP (82 aa). Residues 87–215 enclose the GST C-terminal domain; sequence SLIDYAHIEQ…VKQTESVPPV (129 aa). The segment at 210 to 269 is disordered; that stretch reads ESVPPVPSAKKPSQPKETKSKAKEEPKKEAKKEPAKPKAEAAEEVEEAPKPKPKNPLDLL. Residues 223–250 are compositionally biased toward basic and acidic residues; it reads QPKETKSKAKEEPKKEAKKEPAKPKAEA. Positions 262–422 constitute an EF-1-gamma C-terminal domain; that stretch reads PKNPLDLLPP…EALLDAKCFK (161 aa).

In terms of assembly, EF-1 is composed of four subunits: alpha, beta, delta, and gamma.

Probably plays a role in anchoring the complex to other cellular components. The protein is Elongation factor 1-gamma of Prunus avium (Cherry).